Here is a 368-residue protein sequence, read N- to C-terminus: Mitogen-activated protein kinase KSS1 (368 aa).

Positions 13–313 constitute a Protein kinase domain; the sequence is YKLVDLIGEG…AAEALRHPYL (301 aa). ATP-binding positions include 19-27 and K42; that span reads IGEGAYGTV. D143 (proton acceptor) is an active-site residue. Position 183 is a phosphothreonine (T183). Positions 183 to 185 match the TXY motif; it reads TEY. Y185 is subject to Phosphotyrosine.

It belongs to the protein kinase superfamily. Ser/Thr protein kinase family. MAP kinase subfamily. HOG1 sub-subfamily. In terms of assembly, in the nucleus, KSS1 forms a complex with DIG1, DIG2 and STE12; in contrast to FUS3 the interaction of KSS1 with STE12 does not depend on DIG1 and DIG2. Phosphorylated KSS1 shows reduced interaction with STE12. During pheromone activation and phosphorylation, KSS1 forms a membrane-associated complex with the scaffold protein STE5, the MAPKK STE7, the MAPKKK STE11, and the G-protein beta subunit GBB/STE4; interacting directly with POF1, STE7 and STE5 proteins. It depends on Mg(2+) as a cofactor. Dually phosphorylated on Thr-183 and Tyr-185 by STE7 in response to pheromone or carbon/nitrogen limitation, which activates the enzyme. Activated FUS3 down-regulates KSS1 phosphorylation.

The protein resides in the nucleus. It is found in the cytoplasm. It localises to the periplasm. It carries out the reaction L-seryl-[protein] + ATP = O-phospho-L-seryl-[protein] + ADP + H(+). It catalyses the reaction L-threonyl-[protein] + ATP = O-phospho-L-threonyl-[protein] + ADP + H(+). Its activity is regulated as follows. Activated by tyrosine and threonine phosphorylation after pheromone treatment or carbon/nitrogen limitation. In terms of biological role, together with closely related FUS3, KSS1 is the final kinase in the signal transduction cascade regulating activation/repression of the mating and filamentation pathways, induced by pheromone and nitrogen/carbon limitation, respectively. Phosphorylated KSS1 activates both pathways, whereas activated FUS3 activates the mating but suppresses the filamentation pathway. KSS1 activity is down-regulated by FUS3 during pheromone induction to prevent inappropriate activation of the filamentation pathway. During induction of filamentation, KSS1 activates the transcription factor STE12 resulting in its binding to and activation of filamentation specific genes. Non-activated KSS1 has a kinase-independent repressive effect on STE12 transcriptional activity, that is mediated by direct binding to STE12 and depends on the presence of DIG1 and DIG2, and that is required for the suppression of filamentation under normal growth conditions. SSN3/SRB10 contributes further to the suppression of filamentation under these conditions by reducing STE12 stability independent of KSS1. FUS3 can partially compensate for the lack of KSS1 but filamentation becomes constitutively induced at a low level in the absence of any signal. KSS1 phosphorylates STE7, STE5, FAR1, DIG1, DIG2, STE12, and SST2. The polypeptide is Mitogen-activated protein kinase KSS1 (KSS1) (Saccharomyces cerevisiae (strain ATCC 204508 / S288c) (Baker's yeast)).